A 6907-amino-acid polypeptide reads, in one-letter code: Fibrous sheath-interacting protein 2 (6907 aa).

A disordered region spans residues 273–292 (EERIEEQQHRNREESDRKKQ). Serine 430 carries the phosphoserine modification. Disordered stretches follow at residues 439–472 (SQAFLDPSKEEKETNADWDGRPTKRSSYLCESGP), 954–990 (FQKSRQPRISSPSDTKEKYRLTGTRLSNSPRSGRPFP), 1545–1573 (VQEDNKEETKSKAKPVAPVSSKTPSTKEM), 3202–3257 (VSSD…FDQT), 5650–5672 (RTSSNEGRRDSPTQTCRDEEHHS), 5725–5781 (SAQS…KPGI), 5850–5880 (DKGNQFPGGKVSSVPKVPPRYKEPTTDEAPS), and 6852–6874 (GSANPSKEVISETPKPDVSKQGS). Over residues 445 to 460 (PSKEEKETNADWDGRP) the composition is skewed to basic and acidic residues. The span at 954-966 (FQKSRQPRISSPS) shows a compositional bias: polar residues. Basic and acidic residues-rich tracts occupy residues 1545–1555 (VQEDNKEETKS) and 3213–3229 (SVEDTVKNSEPTKRPDS). Residues 5728–5741 (SVTTKKVSSSTNKN) are compositionally biased toward low complexity. A coiled-coil region spans residues 5738 to 5766 (TNKNISAKEKEEEEREKEKVREEIKSEPS). Basic and acidic residues predominate over residues 5743 to 5778 (SAKEKEEEEREKEKVREEIKSEPSKPDDPQNQRESK).

In terms of assembly, may interact with AKAP4. In terms of tissue distribution, predominantly expressed in testis.

Its function is as follows. Plays a role in spermatogenesis. The chain is Fibrous sheath-interacting protein 2 (FSIP2) from Homo sapiens (Human).